The following is a 444-amino-acid chain: MAPQARGLGLCSLLALQASLAAVFITQEEAHSVLRRQRRANSFLEELRPGSLERECKEELCSFEEAREVFQSTERTKQFWITYNDGDQCASNPCQNGGSCEDQIQSYICFCLADFEGRNCEKNKNDQLICMYENGGCEQYCSDHVGSQRSCRCHEGYTLLPNGVSCTPTVDYPCGKVPALEKRGASNPQGRIVGGKVCPKGECPWQAALMNGSTLLCGGSLLDTHWVVSAAHCFDKLSSLRNLTIVLGEHDLSEHEGDEQVRHVAQLIMPDKYVPGKTDHDIALLRLLQPAALTNNVVPLCLPERNFSESTLATIRFSRVSGWGQLLYRGALARELMAIDVPRLMTQDCVEQSEHKPGSPEVTGNMFCAGYLDGSKDACKGDSGGPHATSYHGTWYLTGVVSWGEGCAAVGHVGVYTRVSRYTEWLSRLMRSKLHHGIQRHPFP.

A signal peptide spans 1-21 (MAPQARGLGLCSLLALQASLA). A propeptide spanning residues 22–39 (AVFITQEEAHSVLRRQRR) is cleaved from the precursor. In terms of domain architecture, Gla spans 40–84 (ANSFLEELRPGSLERECKEELCSFEEAREVFQSTERTKQFWITYN). Glu-45, Glu-46, Glu-53, Glu-55, Glu-58, Glu-59, Glu-64, Glu-65, Glu-68, and Glu-74 each carry 4-carboxyglutamate. Cys-56 and Cys-61 are joined by a disulfide. The 37-residue stretch at 85–121 (DGDQCASNPCQNGGSCEDQIQSYICFCLADFEGRNCE) folds into the EGF-like 1; calcium-binding domain. Intrachain disulfides connect Cys-89–Cys-100, Cys-94–Cys-109, Cys-111–Cys-120, Cys-130–Cys-141, Cys-137–Cys-151, Cys-153–Cys-166, Cys-174–Cys-301, Cys-198–Cys-203, and Cys-217–Cys-233. Residue Ser-91 is glycosylated (O-linked (Glc...) serine; alternate). Ser-91 carries O-linked (Xyl...) serine; alternate glycosylation. Ser-99 carries O-linked (Fuc) serine glycosylation. At Asp-102 the chain carries (3R)-3-hydroxyaspartate. Residues 126 to 167 (DQLICMYENGGCEQYCSDHVGSQRSCRCHEGYTLLPNGVSCT) form the EGF-like 2 domain. The 240-residue stretch at 192–431 (IVGGKVCPKG…YTEWLSRLMR (240 aa)) folds into the Peptidase S1 domain. A glycan (N-linked (GlcNAc...) asparagine) is linked at Asn-211. The active-site Charge relay system is His-232. Asn-242 carries N-linked (GlcNAc...) asparagine glycosylation. The active-site Charge relay system is the Asp-281. N-linked (GlcNAc...) asparagine glycosylation is present at Asn-306. An intrachain disulfide couples Cys-349 to Cys-368. Residue Asp-377 participates in substrate binding. Cys-379 and Cys-407 form a disulfide bridge. Ser-383 acts as the Charge relay system in catalysis.

This sequence belongs to the peptidase S1 family. In terms of assembly, heterodimer of a light chain and a heavy chain linked by a disulfide bond. The vitamin K-dependent, enzymatic carboxylation of some glutamate residues allows the modified protein to bind calcium. In terms of processing, the iron and 2-oxoglutarate dependent 3-hydroxylation of aspartate and asparagine is (R) stereospecific within EGF domains. Post-translationally, O-glycosylated. O-fucosylated by POFUT1 on a conserved serine or threonine residue found in the consensus sequence C2-X(4,5)-[S/T]-C3 of EGF domains, where C2 and C3 are the second and third conserved cysteines. Can be either O-glucosylated or O-xylosylated at Ser-91 by POGLUT1. Plasma.

The protein localises to the secreted. It catalyses the reaction Selective cleavage of Arg-|-Ile bond in factor X to form factor Xa.. Initiates the extrinsic pathway of blood coagulation. Serine protease that circulates in the blood in a zymogen form. Factor VII is converted to factor VIIa by factor Xa, factor XIIa, factor IXa, or thrombin by minor proteolysis. In the presence of tissue factor and calcium ions, factor VIIa then converts factor X to factor Xa by limited proteolysis. Factor VIIa also converts factor IX to factor IXa in the presence of tissue factor and calcium. This is Coagulation factor VII (F7) from Oryctolagus cuniculus (Rabbit).